Here is a 196-residue protein sequence, read N- to C-terminus: Peptidyl-tRNA hydrolase (196 aa).

Tyr-17 provides a ligand contact to tRNA. His-22 (proton acceptor) is an active-site residue. TRNA is bound by residues Phe-68, Asn-70, and Asn-116.

It belongs to the PTH family. Monomer.

The protein resides in the cytoplasm. The catalysed reaction is an N-acyl-L-alpha-aminoacyl-tRNA + H2O = an N-acyl-L-amino acid + a tRNA + H(+). In terms of biological role, hydrolyzes ribosome-free peptidyl-tRNAs (with 1 or more amino acids incorporated), which drop off the ribosome during protein synthesis, or as a result of ribosome stalling. Its function is as follows. Catalyzes the release of premature peptidyl moieties from peptidyl-tRNA molecules trapped in stalled 50S ribosomal subunits, and thus maintains levels of free tRNAs and 50S ribosomes. The sequence is that of Peptidyl-tRNA hydrolase from Photorhabdus laumondii subsp. laumondii (strain DSM 15139 / CIP 105565 / TT01) (Photorhabdus luminescens subsp. laumondii).